A 395-amino-acid chain; its full sequence is Mitogen-activated protein kinase 6 (395 aa).

Positions 1-35 are disordered; sequence MDGGSGQPAADTEMTEAPGGFPAAAPSPQMPGIEN. Over residues 17 to 27 the composition is skewed to low complexity; it reads APGGFPAAAPS. Residues 63 to 348 form the Protein kinase domain; that stretch reads KPPIMPIGKG…VLDALAHPYL (286 aa). Residues 69-77 and Lys92 contribute to the ATP site; that span reads IGKGAYGIV. Catalysis depends on Asp189, which acts as the Proton acceptor. Thr221 carries the post-translational modification Phosphothreonine. The TXY signature appears at 221 to 223; that stretch reads TEY. Tyr223 bears the Phosphotyrosine mark. Thr226 carries the post-translational modification Phosphothreonine.

The protein belongs to the protein kinase superfamily. CMGC Ser/Thr protein kinase family. MAP kinase subfamily. As to quaternary structure, interacts with MEKK1, MKK1 and MKK2. May form a ternary complex with MEKK1 and MKK1 or MKK2. Interacts with NDPK2, AP2C1, MKP1 and PTP1. Interacts with DSPTP1B/MKP2, especially during HR-like responses triggered by fungal elicitors. Interacts with MKK4, MKK5 and MKK6. Binds to LIP5. Interacts with VQ4 and IKU1/VQ14. Interacts with RACK1A, RACK1B and RACK1C. Interacts with PTP1. Interacts with FLZ9. Binds to BASL and YDA. Post-translationally, dually phosphorylated on Thr-221 and Tyr-223, which activates the enzyme. Dephosphorylated by DSPTP1B/MKP2.

It is found in the cytoplasm. The protein localises to the nucleus. It localises to the cell cortex. The enzyme catalyses L-seryl-[protein] + ATP = O-phospho-L-seryl-[protein] + ADP + H(+). It catalyses the reaction L-threonyl-[protein] + ATP = O-phospho-L-threonyl-[protein] + ADP + H(+). Activated by threonine and tyrosine phosphorylation. Activated by the MAP kinase kinases MKK2, MKK3, MKK4, MKK5, MKK7 and MKK9. Activated in response to touch, wounding, low temperature, low humidity, salt stress, hydrogen peroxide, ozone, ACC (an ethylene precursor), jasmonic acid (JA), mastoparan and UVC. Activated in response to elicitors: oligogalacturonides, hexameric chitin fragments, fungal xylanase, and the bacterial flagellin and harpin. Activated upon Pseudomonas syringae pv. tomato DC3000 infection. Repressed by the protein phosphatase 2C AP2C1 and the protein-tyrosine-phosphatases MKP1 and PTP1. Repressed by DSPTP1B/MKP2-mediated dephosphorylation. Activated by polarized BASL. Triggered by MKKK20 in response to various abiotic stresses, including osmotic stress, cold and reactive oxygen species (ROS). Activated by MKK5 in response to abscisic acid (ABA). In terms of biological role, mitogen-activated protein kinase (MAPK) which regulates abscisic acid (ABA) responses in a MAPKKK20-MKK5-MPK6 cascade involved in root growth (e.g. root cell division and elongation) and stomatal response. Involved in oxidative stress-mediated signaling cascade (such as ozone). Involved in the innate immune MAP kinase signaling cascade (MEKK1, MKK4/MKK5 and MPK3/MPK6) downstream of bacterial flagellin receptor FLS2. May be involved in hypersensitive response (HR)-mediated signaling cascade by modulating LIP5 phosphorylation and subsequent multivesicular bodies (MVBs) trafficking. May phosphorylate regulators of WRKY transcription factors. Phosphorylates 1-aminocyclopropane-1-carboxylic acid synthases (ACS2 and ACS6) and may be involved in the regulation of bacterial elicitor flagellin-induced ethylene production. Regulates locally gene-mediated and basal resistance response to certain pathogens. May be involved in the cold and salinity stress-mediated MAP kinase signaling cascade (MEKK1, MKK1/MKK2 and MPK4/MPK6). MKK1-MPK6 module mediates abscisic acid (ABA)-dependent CAT1 expression with H(2)O(2) production and response to drought and salt stress. MKK1-MPK6 module is also involved in sugar signaling during the process of seed germination. MKK3-MPK6 module plays an important role in the jasmonate signal transduction pathway through the negative regulation of MYC2/JIN1 expression. MKK9-MPK3/MPK6 module phosphorylates and activates EIN3, leading to the promotion of EIN3-mediated transcription in ethylene signaling. MPK3/MPK6 cascade regulates camalexin synthesis through transcriptional regulation of the biosynthetic genes after pathogen infection. MKK9-MPK6 module positively regulates leaf senescence. YDA-MKK4/MKK5-MPK3/MPK6 module regulates stomatal cell fate before the guard mother cell (GMC) is specified. When activated, reinforces the feedback loop by phosphorylating BASL, and inhibits stomatal fate by phosphorylating SPCH. This MAPK cascade also functions downstream of the ER receptor in regulating coordinated local cell proliferation, which shapes the morphology of plant organs. The sequence is that of Mitogen-activated protein kinase 6 from Arabidopsis thaliana (Mouse-ear cress).